The sequence spans 319 residues: Bidirectional sugar transporter SWEET15 (319 aa).

Residues 1–10 lie on the Extracellular side of the membrane; the sequence is MAFMSMERST. A helical membrane pass occupies residues 11 to 31; that stretch reads WAFTFGILGNLISLMVFLSPL. In terms of domain architecture, MtN3/slv 1 spans 13 to 99; the sequence is FTFGILGNLI…AMYLAYAPKS (87 aa). Residues 32-50 lie on the Cytoplasmic side of the membrane; the sequence is PTFYRVYRKKSTEGFQSTP. The chain crosses the membrane as a helical span at residues 51–71; it reads YVVTLFSCMLWMYYAFVKSGA. Position 72 (Glu72) is a topological domain, extracellular. The chain crosses the membrane as a helical span at residues 73 to 93; sequence LLVTINGVGCVIETVYLAMYL. Over 94-106 the chain is Cytoplasmic; that stretch reads AYAPKSARMLTAK. The chain crosses the membrane as a helical span at residues 107-127; that stretch reads MLLGLNIGLFGVIALVTLLLS. The Extracellular segment spans residues 128–134; that stretch reads RGELRVH. The chain crosses the membrane as a helical span at residues 135–155; it reads VLGWICVAVSLSVFAAPLSII. The MtN3/slv 2 domain occupies 135–219; the sequence is VLGWICVAVS…ALYMAYRSKK (85 aa). At 156–167 the chain is on the cytoplasmic side; sequence RLVIRTKSVEFM. The chain crosses the membrane as a helical span at residues 168 to 188; that stretch reads PFSLSFFLVLSAVIWFLYGLL. Residues 189 to 191 lie on the Extracellular side of the membrane; the sequence is KKD. The chain crosses the membrane as a helical span at residues 192–212; sequence VFVALPNVLGFVFGVAQMALY. Residues 213–319 are Cytoplasmic-facing; sequence MAYRSKKPLV…KPDMAIVVEV (107 aa).

Belongs to the SWEET sugar transporter family. Forms homooligomers and/or heterooligomers.

The protein localises to the cell membrane. Mediates both low-affinity uptake and efflux of sugar across the plasma membrane. The polypeptide is Bidirectional sugar transporter SWEET15 (SWEET15) (Oryza sativa subsp. indica (Rice)).